The chain runs to 147 residues: TRAF-interacting protein with FHA domain-containing protein B (147 aa).

One can recognise an FHA domain in the interval 36–108 (LLVGRGQDTH…LHSVNRISFS (73 aa)).

As to quaternary structure, interacts with TIFA.

Functionally, inhibits TIFA-mediated TRAF6 activation possibly by inducing a conformational change in TIFA. The sequence is that of TRAF-interacting protein with FHA domain-containing protein B from Rattus norvegicus (Rat).